Here is a 360-residue protein sequence, read N- to C-terminus: MVETFYEVMRRQGISRRSFLKYCSLTATSLGLGPSFLPQIAHAMETKPRTPVLWLHGLECTCCSESFIRSAHPLAKDVVLSMISLDYDDTLMAAAGHQAEAILEEIMTKYKGNYILAVEGNPPLNQDGMSCIIGGRPFIEQLKYVAKDAKAIISWGSCASWGCVQAAKPNPTQATPVHKVITDKPIIKVPGCPPIAEVMTGVITYMLTFDRIPELDRQGRPKMFYSQRIHDKCYRRPHFDAGQFVEEWDDESARKGFCLYKMGCKGPTTYNACSTTRWNEGTSFPIQSGHGCIGCSEDGFWDKGSFYDRLTGISQFGVEANADKIGGTASVVVGAAVTAHAAASAIKRASKKNETSGSEH.

The tat-type signal signal peptide spans 1–43; sequence MVETFYEVMRRQGISRRSFLKYCSLTATSLGLGPSFLPQIAHA. Cys60, Cys63, Cys158, Cys192, His230, Cys233, Cys258, and Cys264 together coordinate [4Fe-4S] cluster. 3 residues coordinate [3Fe-4S] cluster: Cys273, Cys292, and Cys295.

It belongs to the [NiFe]/[NiFeSe] hydrogenase small subunit family. As to quaternary structure, heterodimer of a large and a small subunit. It depends on [4Fe-4S] cluster as a cofactor. [3Fe-4S] cluster serves as cofactor. In terms of processing, predicted to be exported by the Tat system. The position of the signal peptide cleavage has been experimentally proven.

It is found in the cell membrane. It catalyses the reaction H2 + A = AH2. Functionally, this enzyme recycles the H(2) produced by nitrogenase to increase the production of ATP and to protect nitrogenase against inhibition or damage by O(2) under carbon- or phosphate-limited conditions. This is Uptake hydrogenase small subunit (hoxK) from Cupriavidus necator (strain ATCC 17699 / DSM 428 / KCTC 22496 / NCIMB 10442 / H16 / Stanier 337) (Ralstonia eutropha).